A 401-amino-acid chain; its full sequence is UDP-N-acetylglucosamine--N-acetylmuramyl-(pentapeptide) pyrophosphoryl-undecaprenol N-acetylglucosamine transferase (401 aa).

Positions 1–24 (MTRISVPAGQERNDGGISVPAGQE) are disordered. Residues 39 to 41 (TAG), asparagine 157, arginine 194, serine 228, and glutamine 324 each bind UDP-N-acetyl-alpha-D-glucosamine.

It belongs to the glycosyltransferase 28 family. MurG subfamily.

Its subcellular location is the cell membrane. It carries out the reaction di-trans,octa-cis-undecaprenyl diphospho-N-acetyl-alpha-D-muramoyl-L-alanyl-D-glutamyl-meso-2,6-diaminopimeloyl-D-alanyl-D-alanine + UDP-N-acetyl-alpha-D-glucosamine = di-trans,octa-cis-undecaprenyl diphospho-[N-acetyl-alpha-D-glucosaminyl-(1-&gt;4)]-N-acetyl-alpha-D-muramoyl-L-alanyl-D-glutamyl-meso-2,6-diaminopimeloyl-D-alanyl-D-alanine + UDP + H(+). The protein operates within cell wall biogenesis; peptidoglycan biosynthesis. Functionally, cell wall formation. Catalyzes the transfer of a GlcNAc subunit on undecaprenyl-pyrophosphoryl-MurNAc-pentapeptide (lipid intermediate I) to form undecaprenyl-pyrophosphoryl-MurNAc-(pentapeptide)GlcNAc (lipid intermediate II). The polypeptide is UDP-N-acetylglucosamine--N-acetylmuramyl-(pentapeptide) pyrophosphoryl-undecaprenol N-acetylglucosamine transferase (Mycolicibacterium vanbaalenii (strain DSM 7251 / JCM 13017 / BCRC 16820 / KCTC 9966 / NRRL B-24157 / PYR-1) (Mycobacterium vanbaalenii)).